Consider the following 186-residue polypeptide: Ribosome-recycling factor (186 aa).

The protein belongs to the RRF family.

It localises to the cytoplasm. Responsible for the release of ribosomes from messenger RNA at the termination of protein biosynthesis. May increase the efficiency of translation by recycling ribosomes from one round of translation to another. The sequence is that of Ribosome-recycling factor from Maricaulis maris (strain MCS10) (Caulobacter maris).